We begin with the raw amino-acid sequence, 199 residues long: Molybdenum cofactor guanylyltransferase (199 aa).

Residues 12 to 14, Lys-25, Asn-53, Asp-71, and Asp-101 contribute to the GTP site; that span reads LAG. Asp-101 lines the Mg(2+) pocket.

The protein belongs to the MobA family. As to quaternary structure, monomer. The cofactor is Mg(2+).

It is found in the cytoplasm. It carries out the reaction Mo-molybdopterin + GTP + H(+) = Mo-molybdopterin guanine dinucleotide + diphosphate. Its function is as follows. Transfers a GMP moiety from GTP to Mo-molybdopterin (Mo-MPT) cofactor (Moco or molybdenum cofactor) to form Mo-molybdopterin guanine dinucleotide (Mo-MGD) cofactor. This is Molybdenum cofactor guanylyltransferase from Cupriavidus taiwanensis (strain DSM 17343 / BCRC 17206 / CCUG 44338 / CIP 107171 / LMG 19424 / R1) (Ralstonia taiwanensis (strain LMG 19424)).